We begin with the raw amino-acid sequence, 266 residues long: Lipooligosaccharide biosynthesis protein lic2B (266 aa).

Belongs to the glycosyltransferase 25 family.

Functionally, involved in extracellular lipooligosaccharide (LOS) biosynthesis and virulence expression. Involved in the synthesis of the oligosaccharide moiety of the LOS molecule by adding GalNAc. This chain is Lipooligosaccharide biosynthesis protein lic2B (lic2B), found in Haemophilus influenzae.